Here is a 650-residue protein sequence, read N- to C-terminus: Acetyl-coenzyme A synthetase (650 aa).

CoA is bound by residues 191–194 (RGGR), T311, and N335. ATP-binding positions include 387–389 (GEP), 411–416 (DTWWQT), D500, and R515. Residue S523 coordinates CoA. Position 526 (R526) interacts with ATP. 3 residues coordinate Mg(2+): V537, H539, and V542. R584 lines the CoA pocket. K609 is modified (N6-acetyllysine).

This sequence belongs to the ATP-dependent AMP-binding enzyme family. The cofactor is Mg(2+). Acetylated. Deacetylation by the SIR2-homolog deacetylase activates the enzyme.

It carries out the reaction acetate + ATP + CoA = acetyl-CoA + AMP + diphosphate. In terms of biological role, catalyzes the conversion of acetate into acetyl-CoA (AcCoA), an essential intermediate at the junction of anabolic and catabolic pathways. AcsA undergoes a two-step reaction. In the first half reaction, AcsA combines acetate with ATP to form acetyl-adenylate (AcAMP) intermediate. In the second half reaction, it can then transfer the acetyl group from AcAMP to the sulfhydryl group of CoA, forming the product AcCoA. This Shewanella putrefaciens (strain CN-32 / ATCC BAA-453) protein is Acetyl-coenzyme A synthetase.